A 160-amino-acid chain; its full sequence is Probable chemoreceptor glutamine deamidase CheD (160 aa).

The protein belongs to the CheD family.

The catalysed reaction is L-glutaminyl-[protein] + H2O = L-glutamyl-[protein] + NH4(+). In terms of biological role, probably deamidates glutamine residues to glutamate on methyl-accepting chemotaxis receptors (MCPs), playing an important role in chemotaxis. This chain is Probable chemoreceptor glutamine deamidase CheD, found in Desulfitobacterium hafniense (strain DSM 10664 / DCB-2).